Reading from the N-terminus, the 329-residue chain is Probable quinone oxidoreductase (329 aa).

Serine 191 carries the post-translational modification Phosphoserine.

The protein belongs to the zinc-containing alcohol dehydrogenase family. Quinone oxidoreductase subfamily.

Its subcellular location is the cytoplasm. It localises to the nucleus. It catalyses the reaction 2 a quinone + NADPH + H(+) = 2 a 1,4-benzosemiquinone + NADP(+). The sequence is that of Probable quinone oxidoreductase (zta1) from Schizosaccharomyces pombe (strain 972 / ATCC 24843) (Fission yeast).